The chain runs to 160 residues: Ribosome maturation factor RimP (160 aa).

The protein belongs to the RimP family.

Its subcellular location is the cytoplasm. Its function is as follows. Required for maturation of 30S ribosomal subunits. In Orientia tsutsugamushi (strain Boryong) (Rickettsia tsutsugamushi), this protein is Ribosome maturation factor RimP.